Consider the following 227-residue polypeptide: Uracil-DNA glycosylase 2 (227 aa).

The active-site Proton acceptor is D67.

Belongs to the uracil-DNA glycosylase (UDG) superfamily. UNG family.

The protein localises to the cytoplasm. It catalyses the reaction Hydrolyzes single-stranded DNA or mismatched double-stranded DNA and polynucleotides, releasing free uracil.. In terms of biological role, excises uracil residues from the DNA which can arise as a result of misincorporation of dUMP residues by DNA polymerase or due to deamination of cytosine. The sequence is that of Uracil-DNA glycosylase 2 (ung2) from Streptomyces coelicolor (strain ATCC BAA-471 / A3(2) / M145).